We begin with the raw amino-acid sequence, 347 residues long: NADH-ubiquinone oxidoreductase chain 2 (347 aa).

A run of 10 helical transmembrane segments spans residues 13 to 33 (IFTGTLITALSSHWFFTWVGL), 60 to 80 (FLTQATASMILLMAILSNSML), 96 to 116 (LMIMMAMAMKLGMAPFHFWVP), 123 to 143 (PLMSGLLLLTWQKLAPISIMY), 149 to 169 (LNVNLLLTLSILSIMAGSWGG), 178 to 198 (ILAYSSITHMGWMMAVLPYNP), 201 to 221 (TILNLTIYIILTTTAFLLLNL), 247 to 267 (TLLSLGGLPPLTGFLPKWVII), 274 to 294 (NSLIIPTIMAIITLLNLYFYL), and 326 to 346 (LPTLITLTTLLLPISPFMLMI).

It belongs to the complex I subunit 2 family. Core subunit of respiratory chain NADH dehydrogenase (Complex I) which is composed of 45 different subunits. Interacts with TMEM242.

It is found in the mitochondrion inner membrane. The catalysed reaction is a ubiquinone + NADH + 5 H(+)(in) = a ubiquinol + NAD(+) + 4 H(+)(out). In terms of biological role, core subunit of the mitochondrial membrane respiratory chain NADH dehydrogenase (Complex I) which catalyzes electron transfer from NADH through the respiratory chain, using ubiquinone as an electron acceptor. Essential for the catalytic activity and assembly of complex I. The protein is NADH-ubiquinone oxidoreductase chain 2 of Pan troglodytes (Chimpanzee).